The primary structure comprises 378 residues: Ribosomal RNA large subunit methyltransferase G (378 aa).

It belongs to the methyltransferase superfamily. RlmG family.

It localises to the cytoplasm. The catalysed reaction is guanosine(1835) in 23S rRNA + S-adenosyl-L-methionine = N(2)-methylguanosine(1835) in 23S rRNA + S-adenosyl-L-homocysteine + H(+). In terms of biological role, specifically methylates the guanine in position 1835 (m2G1835) of 23S rRNA. This chain is Ribosomal RNA large subunit methyltransferase G, found in Shewanella putrefaciens (strain CN-32 / ATCC BAA-453).